The following is a 485-amino-acid chain: N-succinylglutamate 5-semialdehyde dehydrogenase (485 aa).

220 to 225 (GSANTG) lines the NAD(+) pocket. Active-site residues include Glu243 and Cys278.

This sequence belongs to the aldehyde dehydrogenase family. AstD subfamily.

The catalysed reaction is N-succinyl-L-glutamate 5-semialdehyde + NAD(+) + H2O = N-succinyl-L-glutamate + NADH + 2 H(+). Its pathway is amino-acid degradation; L-arginine degradation via AST pathway; L-glutamate and succinate from L-arginine: step 4/5. In terms of biological role, catalyzes the NAD-dependent reduction of succinylglutamate semialdehyde into succinylglutamate. In Vibrio atlanticus (strain LGP32) (Vibrio splendidus (strain Mel32)), this protein is N-succinylglutamate 5-semialdehyde dehydrogenase.